A 528-amino-acid chain; its full sequence is Cytochrome P450 1A5 (528 aa).

Cys467 serves as a coordination point for heme.

The protein belongs to the cytochrome P450 family. Heme serves as cofactor.

The protein resides in the endoplasmic reticulum membrane. It is found in the microsome membrane. It catalyses the reaction an organic molecule + reduced [NADPH--hemoprotein reductase] + O2 = an alcohol + oxidized [NADPH--hemoprotein reductase] + H2O + H(+). Functionally, cytochromes P450 are a group of heme-thiolate monooxygenases. In liver microsomes, this enzyme is involved in an NADPH-dependent electron transport pathway. It oxidizes a variety of structurally unrelated compounds, including steroids, fatty acids, and xenobiotics. In Gallus gallus (Chicken), this protein is Cytochrome P450 1A5 (CYP1A5).